We begin with the raw amino-acid sequence, 356 residues long: 3-isopropylmalate dehydrogenase (356 aa).

Residues arginine 95, arginine 105, arginine 133, and aspartate 223 each coordinate substrate. The Mg(2+) site is built by aspartate 223, aspartate 247, and aspartate 251. 281–293 (GSAPDIAGQNKAN) is an NAD(+) binding site.

Belongs to the isocitrate and isopropylmalate dehydrogenases family. LeuB type 1 subfamily. In terms of assembly, homodimer. Mg(2+) is required as a cofactor. Mn(2+) serves as cofactor.

Its subcellular location is the cytoplasm. The enzyme catalyses (2R,3S)-3-isopropylmalate + NAD(+) = 4-methyl-2-oxopentanoate + CO2 + NADH. It participates in amino-acid biosynthesis; L-leucine biosynthesis; L-leucine from 3-methyl-2-oxobutanoate: step 3/4. In terms of biological role, catalyzes the oxidation of 3-carboxy-2-hydroxy-4-methylpentanoate (3-isopropylmalate) to 3-carboxy-4-methyl-2-oxopentanoate. The product decarboxylates to 4-methyl-2 oxopentanoate. In Neisseria meningitidis serogroup B (strain ATCC BAA-335 / MC58), this protein is 3-isopropylmalate dehydrogenase.